The primary structure comprises 372 residues: sn-glycerol-3-phosphate import ATP-binding protein UgpC (372 aa).

In terms of domain architecture, ABC transporter spans 2-233; the sequence is LDIQQLVKTY…PASTFVASFI (232 aa). ATP is bound at residue 35–42; that stretch reads GPSGCGKS.

It belongs to the ABC transporter superfamily. sn-glycerol-3-phosphate importer (TC 3.A.1.1.3) family. In terms of assembly, the complex is composed of two ATP-binding proteins (UgpC), two transmembrane proteins (UgpA and UgpE) and a solute-binding protein (UgpB).

The protein localises to the cell inner membrane. It carries out the reaction sn-glycerol 3-phosphate(out) + ATP + H2O = sn-glycerol 3-phosphate(in) + ADP + phosphate + H(+). Part of the ABC transporter complex UgpBAEC involved in sn-glycerol-3-phosphate (G3P) import. Responsible for energy coupling to the transport system. The protein is sn-glycerol-3-phosphate import ATP-binding protein UgpC of Vibrio vulnificus (strain CMCP6).